Consider the following 819-residue polypeptide: DNA topoisomerase 4 subunit A (819 aa).

One can recognise a Topo IIA-type catalytic domain in the interval 30–496 (LPDIRDGLKP…QIIEIDTASL (467 aa)). Tyrosine 118 acts as the O-(5'-phospho-DNA)-tyrosine intermediate in catalysis.

Belongs to the type II topoisomerase GyrA/ParC subunit family. ParC type 2 subfamily. In terms of assembly, heterotetramer composed of ParC and ParE.

Its subcellular location is the cell membrane. The catalysed reaction is ATP-dependent breakage, passage and rejoining of double-stranded DNA.. Functionally, topoisomerase IV is essential for chromosome segregation. It relaxes supercoiled DNA. Performs the decatenation events required during the replication of a circular DNA molecule. The chain is DNA topoisomerase 4 subunit A from Streptococcus pyogenes serotype M6 (strain ATCC BAA-946 / MGAS10394).